We begin with the raw amino-acid sequence, 466 residues long: Alpha-1A adrenergic receptor (466 aa).

The Extracellular segment spans residues 1 to 25; the sequence is MVFLSGNASDSSNCTHPPAPVNISK. N-linked (GlcNAc...) asparagine glycans are attached at residues Asn7, Asn13, and Asn22. Residues 26-51 form a helical membrane-spanning segment; it reads AILLGVILGGLILFGVLGNILVILSV. At 52–63 the chain is on the cytoplasmic side; the sequence is ACHRHLHSVTHY. A helical transmembrane segment spans residues 64–89; that stretch reads YIVNLAVADLLLTSTVLPFSAIFEIL. Residues 90–99 are Extracellular-facing; that stretch reads GYWAFGRVFC. A helical transmembrane segment spans residues 100-122; sequence NIWAAVDVLCCTASIISLCVISI. The Cytoplasmic portion of the chain corresponds to 123 to 143; the sequence is DRYIGVSYPLRYPTIVTQRRG. Residues 144–168 form a helical membrane-spanning segment; that stretch reads LRALLCVWAFSLVISVGPLFGWRQP. The Extracellular segment spans residues 169–181; it reads APDDETICQINEE. The chain crosses the membrane as a helical span at residues 182–205; it reads PGYVLFSALGSFYVPLTIILAMYC. At 206–272 the chain is on the cytoplasmic side; sequence RVYVVAKRES…KFSREKKAAK (67 aa). A helical transmembrane segment spans residues 273 to 297; sequence TLGIVVGCFVLCWLPFFLVMPIGSF. The Extracellular portion of the chain corresponds to 298–304; the sequence is FPDFKPP. The helical transmembrane segment at 305–329 threads the bilayer; the sequence is ETVFKIVFWLGYLNSCINPIIYPCS. The Cytoplasmic portion of the chain corresponds to 330 to 466; the sequence is SQEFKKAFQN…ISLSENGEEV (137 aa). A Nuclear localization signal motif is present at residues 334 to 349; sequence KKAFQNVLKIQCLRRK. Cys345 carries S-palmitoyl cysteine lipidation.

The protein belongs to the G-protein coupled receptor 1 family. Adrenergic receptor subfamily. ADRA1A sub-subfamily. As to quaternary structure, homo- and heterooligomer. Heterooligomerizes with ADRA1B homooligomers in cardiac myocytes. Interacts with CAVIN4. In terms of tissue distribution, abundant in liver, vas deferens, brain, and aorta, but not in heart.

Its subcellular location is the nucleus membrane. It localises to the cell membrane. The protein resides in the cytoplasm. It is found in the membrane. The protein localises to the caveola. Functionally, this alpha-adrenergic receptor mediates its action by association with G proteins that activate a phosphatidylinositol-calcium second messenger system. Its effect is mediated by G(q) and G(11) proteins. Nuclear ADRA1A-ADRA1B heterooligomers regulate phenylephrine (PE)-stimulated ERK signaling in cardiac myocytes. The polypeptide is Alpha-1A adrenergic receptor (ADRA1A) (Oryctolagus cuniculus (Rabbit)).